Consider the following 733-residue polypeptide: Two pore calcium channel protein 1 (733 aa).

At M1 the chain carries N-acetylmethionine. Residues 1-71 (MEDPLIGRDS…RYYFIFTRLD (71 aa)) are Cytoplasmic-facing. The chain crosses the membrane as a helical span at residues 72 to 92 (LIWSLNYFALLFLNFFEQPLW). The Vacuolar portion of the chain corresponds to 93–120 (CEKNPKPSCKDRDYYYLGELPYLTNAES). Residues 121–141 (IIYEVITLAILLVHTFFPISY) form a helical membrane-spanning segment. The Cytoplasmic segment spans residues 142-158 (EGSRIFWTSRLNLVKVA). Residues 159 to 179 (CVVILFVDVLVDFLYLSPLAF) form a helical membrane-spanning segment. A topological domain (vacuolar) is located at residue D180. Residues 181 to 199 (FLPFRIAPYVRVIIFILSI) traverse the membrane as a helical; Voltage-sensor segment. Topologically, residues 200–218 (RELRDTLVLLSGMLGTYLN) are cytoplasmic. Residues 219 to 239 (ILALWMLFLLFASWIAFVMFE) traverse the membrane as a helical segment. Topologically, residues 240–245 (DTQQGL) are vacuolar. The pore-forming intramembrane region spans 246 to 260 (TVFTSYGATLYQMFI). Residues 261–282 (LFTTSNNPDVWIPAYKSSRWSS) are Vacuolar-facing. A helical transmembrane segment spans residues 283 to 303 (VFFVLYVLIGVYFVTNLILAV). The Cytoplasmic portion of the chain corresponds to 304–428 (VYDSFKEQLA…LSQQLRAFVR (125 aa)). 2 EF-hand domains span residues 322–357 (MKRR…LTNY) and 363–398 (ISKE…IALR). The helical transmembrane segment at 429-449 (SPNFGYAISFILIINFIAVVV) threads the bilayer. At 450-465 (ETTLDIEESSAQKPWQ) the chain is on the vacuolar side. A helical membrane pass occupies residues 466–486 (VAEFVFGWIYVLEMALKIYTY). The Cytoplasmic segment spans residues 487–498 (GFENYWREGANR). The chain crosses the membrane as a helical span at residues 499–519 (FDFLVTWVIVIGETATFITPD). Residues 520–528 (ENTFFSNGE) lie on the Vacuolar side of the membrane. The chain crosses the membrane as a helical; Voltage-sensor span at residues 529–546 (WIRYLLLARMLRLIRLLM). The Cytoplasmic portion of the chain corresponds to 547–557 (NVQRYRAFIAT). A helical transmembrane segment spans residues 558–578 (FITLIPSLMPYLGTIFCVLCI). Residues 579–615 (YCSIGVQVFGGLVNAGNKKLFETELAEDDYLLFNFND) are Vacuolar-facing. Positions 616–630 (YPNGMVTLFNLLVMG) form an intramembrane region, pore-forming. The Vacuolar segment spans residues 631-651 (NWQVWMESYKDLTGTWWSITY). Residues 652–672 (FVSFYVITILLLLNLVVAFVL) traverse the membrane as a helical segment. Topologically, residues 673-733 (EAFFTELDLE…SKPECSTSDT (61 aa)) are cytoplasmic. Residues 686 to 695 (KCQGQDSQEK) show a composition bias toward basic and acidic residues. A disordered region spans residues 686–711 (KCQGQDSQEKRNRRRSAGSKSRSQRV).

It belongs to the calcium channel alpha-1 subunit (TC 1.A.1.11) family. Two pore calcium channel subfamily. As to quaternary structure, homodimer. As to expression, ubiquitously expressed.

The protein localises to the vacuole membrane. Its activity is regulated as follows. Inhibited by Al(3+). In terms of biological role, functions as a voltage-gated inward-rectifying Ca(2+) channel (VDCC) across the vacuole membrane. Is one of the essential components of the slow vacuolar (SV) channel. Acts as the major ROS-responsive Ca(2+) channel and is the possible target of Al-dependent inhibition. Involved in the regulation of germination and stomatal movement. The sequence is that of Two pore calcium channel protein 1 (TPC1) from Arabidopsis thaliana (Mouse-ear cress).